The following is a 377-amino-acid chain: RGVQSSGSVFNVNDYGAKGAGDISQAVMKAWKAACASQGPSTVLIPKGNYNMGEVAMQGPCKGSKIGFQIDGVVKAPADPSKFKSDGWVSFYRIDGLTVSGTGTLDGQGQTAWAKNNCDKNPNCKHAAMNLRFDFLKHAMVRDITSLNSKMFHINVLECEDITFQHVTVTAPGTSINTDGIHVGISKGVTITNTKIATGDDCISIGPGSQNVTITQVNCGPGHGISIGSLGRYNNEKEVRGITVKGCTFSGTMNGVRVKTWPNSPPGAATDLTFQDLTMNNVQNPVILDQEYCPYGQCSRQAPSRIKLSNINFNNIRGTSTGKVAVVIACSHGMPCSNMKIGEINLSYRGAGGPATSTCSNVKPTFSGKQVPAIKCA.

Residues 1–5 (RGVQS) form the signal peptide. PbH1 repeat units follow at residues 159-184 (CEDITFQHVTVTAPGTSINTDGIHVG), 186-207 (SKGVTITNTKIATGDDCISIGP), 209-229 (SQNVTITQVNCGPGHGISIGS), 239-260 (VRGITVKGCTFSGTMNGVRVKT), and 269-290 (ATDLTFQDLTMNNVQNPVILDQ). The active-site Proton donor is the Asp-200. Asn-211 carries an N-linked (GlcNAc...) asparagine glycan. His-223 is an active-site residue. An N-linked (GlcNAc...) asparagine glycan is attached at Asn-345.

This sequence belongs to the glycosyl hydrolase 28 family. In terms of assembly, monomer. In terms of processing, glycosylated. Expressed in pollen (at protein level). Expressed in stem, but not in leaves (at protein level).

It localises to the secreted. The protein localises to the cell wall. It is found in the golgi apparatus. Its subcellular location is the endoplasmic reticulum. The protein resides in the vesicle. It carries out the reaction [(1-&gt;4)-alpha-D-galacturonosyl](n) + H2O = alpha-D-galacturonate + [(1-&gt;4)-alpha-D-galacturonosyl](n-1). Its function is as follows. May function in depolymerizing pectin during pollen development, germination, and tube growth. Acts as an exo-polygalacturonase. The protein is Exopolygalacturonase of Platanus acerifolia (London plane tree).